A 200-amino-acid chain; its full sequence is ATP-dependent Clp protease proteolytic subunit 1 (200 aa).

The active-site Nucleophile is S98. The active site involves H123.

This sequence belongs to the peptidase S14 family. Fourteen ClpP subunits assemble into 2 heptameric rings which stack back to back to give a disk-like structure with a central cavity, resembling the structure of eukaryotic proteasomes.

The protein resides in the cytoplasm. It catalyses the reaction Hydrolysis of proteins to small peptides in the presence of ATP and magnesium. alpha-casein is the usual test substrate. In the absence of ATP, only oligopeptides shorter than five residues are hydrolyzed (such as succinyl-Leu-Tyr-|-NHMec, and Leu-Tyr-Leu-|-Tyr-Trp, in which cleavage of the -Tyr-|-Leu- and -Tyr-|-Trp bonds also occurs).. In terms of biological role, cleaves peptides in various proteins in a process that requires ATP hydrolysis. Has a chymotrypsin-like activity. Plays a major role in the degradation of misfolded proteins. The protein is ATP-dependent Clp protease proteolytic subunit 1 of Mycobacterium bovis (strain ATCC BAA-935 / AF2122/97).